Consider the following 320-residue polypeptide: Malate dehydrogenase 2 (320 aa).

Residues 10–15 (GAGQIG) and Asp-34 each bind NAD(+). Arg-83 and Arg-89 together coordinate substrate. Residues Asn-96 and 119–121 (ITN) contribute to the NAD(+) site. Substrate-binding residues include Asn-121 and Arg-152. Residue His-176 is the Proton acceptor of the active site.

Belongs to the LDH/MDH superfamily. MDH type 3 family.

The catalysed reaction is (S)-malate + NAD(+) = oxaloacetate + NADH + H(+). Catalyzes the reversible oxidation of malate to oxaloacetate. In Rhodopseudomonas palustris (strain BisB18), this protein is Malate dehydrogenase 2.